The sequence spans 269 residues: Phosphate import ATP-binding protein PstB (269 aa).

Residues 22 to 264 (IKVKNVDFFY…PANKKTEDYI (243 aa)) form the ABC transporter domain. Residue 55 to 62 (GSSGSGKS) participates in ATP binding.

It belongs to the ABC transporter superfamily. Phosphate importer (TC 3.A.1.7) family. In terms of assembly, the complex is composed of two ATP-binding proteins (PstB), two transmembrane proteins (PstC and PstA) and a solute-binding protein (PstS).

It localises to the cell membrane. The enzyme catalyses phosphate(out) + ATP + H2O = ADP + 2 phosphate(in) + H(+). Its function is as follows. Part of the ABC transporter complex PstSACB involved in phosphate import. Responsible for energy coupling to the transport system. The sequence is that of Phosphate import ATP-binding protein PstB from Spiroplasma kunkelii.